The primary structure comprises 383 residues: 3-phytase (383 aa).

Residues 1–26 form the signal peptide; that stretch reads MNHSKTLLLTAAAGLMLTCGAVSSQA. A propeptide spanning residues 27–29 is cleaved from the precursor; it reads KHK. The region spanning 30–362 is the BPP domain; sequence LSDPYHFTVN…VPWERIADQI (333 aa).

Requires Ca(2+) as cofactor.

The protein resides in the secreted. It carries out the reaction 1D-myo-inositol hexakisphosphate + H2O = 1D-myo-inositol 1,2,4,5,6-pentakisphosphate + phosphate. Functionally, catalyzes the hydrolysis of inorganic orthophosphate from phytate. Only phytate, ADP, and ATP were hydrolyzed (100, 75, and 50% of the relative activity, respectively). The sequence is that of 3-phytase (phyC) from Bacillus subtilis.